Reading from the N-terminus, the 511-residue chain is Maturase K (511 aa).

It belongs to the intron maturase 2 family. MatK subfamily.

It localises to the plastid. The protein resides in the chloroplast. Usually encoded in the trnK tRNA gene intron. Probably assists in splicing its own and other chloroplast group II introns. This Mandragora officinarum (Mandrake) protein is Maturase K.